Consider the following 442-residue polypeptide: 4-hydroxyphenylpyruvate dioxygenase (442 aa).

2 VOC domains span residues arginine 45 to alanine 200 and arginine 216 to lysine 376. Residues histidine 219, histidine 301, and glutamate 387 each contribute to the Fe cation site.

Belongs to the 4HPPD family. Fe cation is required as a cofactor.

It is found in the cytoplasm. It catalyses the reaction 3-(4-hydroxyphenyl)pyruvate + O2 = homogentisate + CO2. Its pathway is amino-acid degradation; L-phenylalanine degradation; acetoacetate and fumarate from L-phenylalanine: step 3/6. It participates in cofactor biosynthesis; prenylquinone biosynthesis. The sequence is that of 4-hydroxyphenylpyruvate dioxygenase from Daucus carota (Wild carrot).